A 585-amino-acid chain; its full sequence is Aspartate--tRNA(Asp/Asn) ligase (585 aa).

Position 173 (Glu-173) interacts with L-aspartate. An aspartate region spans residues 197 to 200 (QLFK). Residue Arg-219 participates in L-aspartate binding. ATP is bound by residues 219–221 (RDE) and Gln-228. Residue His-447 coordinates L-aspartate. Glu-477 provides a ligand contact to ATP. Residue Arg-484 coordinates L-aspartate. ATP is bound at residue 529–532 (GFDR).

This sequence belongs to the class-II aminoacyl-tRNA synthetase family. Type 1 subfamily. In terms of assembly, homodimer.

It localises to the cytoplasm. It carries out the reaction tRNA(Asx) + L-aspartate + ATP = L-aspartyl-tRNA(Asx) + AMP + diphosphate. Functionally, aspartyl-tRNA synthetase with relaxed tRNA specificity since it is able to aspartylate not only its cognate tRNA(Asp) but also tRNA(Asn). Reaction proceeds in two steps: L-aspartate is first activated by ATP to form Asp-AMP and then transferred to the acceptor end of tRNA(Asp/Asn). This Campylobacter concisus (strain 13826) protein is Aspartate--tRNA(Asp/Asn) ligase.